Here is a 322-residue protein sequence, read N- to C-terminus: uncharacterized protein (322 aa).

A disordered region spans residues 1–63 (MFKIRKRSVP…DEASSSDSHY (63 aa)). A compositionally biased stretch (basic and acidic residues) spans 34–49 (FVDDHGKPIAEYRDFP). Residues 245 to 274 (WKVDRICTYYINRPDKCTRGDNCRFKHDDV) form a C3H1-type zinc finger. The disordered stretch occupies residues 278–322 (HRQKEIQSSRNQSWHHRTSSHKYSSENSDHRGYRRHRSRSPHARQ). Residues 309–322 (GYRRHRSRSPHARQ) are compositionally biased toward basic residues.

This is an uncharacterized protein from Caenorhabditis elegans.